Here is a 312-residue protein sequence, read N- to C-terminus: Ribonuclease HIII (312 aa).

Residues 95–311 (FNCIGSDEAG…REKAQKILKP (217 aa)) form the RNase H type-2 domain. The a divalent metal cation site is built by aspartate 101, glutamate 102, and aspartate 206.

It belongs to the RNase HII family. RnhC subfamily. It depends on Mn(2+) as a cofactor. Requires Mg(2+) as cofactor.

It localises to the cytoplasm. It catalyses the reaction Endonucleolytic cleavage to 5'-phosphomonoester.. In terms of biological role, endonuclease that specifically degrades the RNA of RNA-DNA hybrids. In Staphylococcus aureus (strain USA300), this protein is Ribonuclease HIII.